Reading from the N-terminus, the 71-residue chain is Small ribosomal subunit protein bS18 (71 aa).

The protein belongs to the bacterial ribosomal protein bS18 family. In terms of assembly, part of the 30S ribosomal subunit. Forms a tight heterodimer with protein bS6.

In terms of biological role, binds as a heterodimer with protein bS6 to the central domain of the 16S rRNA, where it helps stabilize the platform of the 30S subunit. In Nostoc sp. (strain PCC 7120 / SAG 25.82 / UTEX 2576), this protein is Small ribosomal subunit protein bS18.